The chain runs to 616 residues: Pyrophosphate--fructose 6-phosphate 1-phosphotransferase subunit alpha (616 aa).

Belongs to the phosphofructokinase type A (PFKA) family. PPi-dependent PFK group II subfamily. Clade 'Long' sub-subfamily. In terms of assembly, tetramer of two alpha (regulatory) and two beta (catalytic) chains.

Its subcellular location is the cytoplasm. It participates in carbohydrate degradation; glycolysis; D-glyceraldehyde 3-phosphate and glycerone phosphate from D-glucose: step 3/4. Its activity is regulated as follows. Allosterically activated by fructose 2,6-bisphosphate. Regulatory subunit of pyrophosphate--fructose 6-phosphate 1-phosphotransferase. This chain is Pyrophosphate--fructose 6-phosphate 1-phosphotransferase subunit alpha, found in Solanum tuberosum (Potato).